We begin with the raw amino-acid sequence, 494 residues long: Glutamate--tRNA ligase (494 aa).

The 'HIGH' region signature appears at 9–19 (PSPTGDPHLGT). Positions 250 to 254 (KLSKR) match the 'KMSKS' region motif. Lysine 253 contacts ATP.

This sequence belongs to the class-I aminoacyl-tRNA synthetase family. Glutamate--tRNA ligase type 1 subfamily. As to quaternary structure, monomer.

The protein resides in the cytoplasm. It carries out the reaction tRNA(Glu) + L-glutamate + ATP = L-glutamyl-tRNA(Glu) + AMP + diphosphate. Functionally, catalyzes the attachment of glutamate to tRNA(Glu) in a two-step reaction: glutamate is first activated by ATP to form Glu-AMP and then transferred to the acceptor end of tRNA(Glu). This chain is Glutamate--tRNA ligase, found in Pseudoalteromonas translucida (strain TAC 125).